The following is a 100-amino-acid chain: Urease subunit gamma (100 aa).

It belongs to the urease gamma subunit family. In terms of assembly, heterotrimer of UreA (gamma), UreB (beta) and UreC (alpha) subunits. Three heterotrimers associate to form the active enzyme.

It is found in the cytoplasm. The catalysed reaction is urea + 2 H2O + H(+) = hydrogencarbonate + 2 NH4(+). The protein operates within nitrogen metabolism; urea degradation; CO(2) and NH(3) from urea (urease route): step 1/1. The sequence is that of Urease subunit gamma from Teredinibacter turnerae (strain ATCC 39867 / T7901).